The chain runs to 258 residues: Aspartate/glutamate leucyltransferase (258 aa).

This sequence belongs to the R-transferase family. Bpt subfamily.

Its subcellular location is the cytoplasm. It catalyses the reaction N-terminal L-glutamyl-[protein] + L-leucyl-tRNA(Leu) = N-terminal L-leucyl-L-glutamyl-[protein] + tRNA(Leu) + H(+). The catalysed reaction is N-terminal L-aspartyl-[protein] + L-leucyl-tRNA(Leu) = N-terminal L-leucyl-L-aspartyl-[protein] + tRNA(Leu) + H(+). In terms of biological role, functions in the N-end rule pathway of protein degradation where it conjugates Leu from its aminoacyl-tRNA to the N-termini of proteins containing an N-terminal aspartate or glutamate. In Bradyrhizobium sp. (strain BTAi1 / ATCC BAA-1182), this protein is Aspartate/glutamate leucyltransferase.